The sequence spans 127 residues: uncharacterized protein (127 aa).

Residues methionine 1–threonine 34 form a disordered region. A compositionally biased stretch (low complexity) spans valine 9 to threonine 34. 2 helical membrane-spanning segments follow: residues isoleucine 47–methionine 67 and threonine 84–valine 104.

The protein localises to the membrane. This is an uncharacterized protein from Saccharomyces cerevisiae (strain ATCC 204508 / S288c) (Baker's yeast).